The primary structure comprises 805 residues: H(+)/Cl(-) exchange transporter 7 (805 aa).

The disordered stretch occupies residues 1-49 (MANVSKKVSWSGRDRDDEEAAPLLRRTARPGGGTPLLNGAGPGAARQSP). Residues 1 to 126 (MANVSKKVSW…TAFRTVEIKR (126 aa)) lie on the Cytoplasmic side of the membrane. Residues serine 9 and serine 60 each carry the phosphoserine modification. Helical transmembrane passes span 127-159 (WVIC…YRVI) and 174-197 (FSLL…VAFI). A Selectivity filter part_1 motif is present at residues 203–207 (GSGIP). Residue serine 204 coordinates chloride. The segment at residues 206–213 (IPQIKCFL) is an intramembrane region (helical). Helical transmembrane passes span 223–241 (RLKT…VVGG) and 247–264 (EGPM…ISQG). The Selectivity filter part_2 motif lies at 245-249 (GKEGP). 2 consecutive intramembrane regions (helical) follow at residues 288 to 300 (FVSA…VSAA) and 304 to 312 (PVGGVLFSL). Transmembrane regions (helical) follow at residues 322–341 (FLTW…LNFV), 375–405 (IPVF…FRIR), 410–432 (PCLQ…FVLI), 487–507 (PLTL…TYGL), and 512–535 (GVFI…LSYL). The short motif at 512-516 (GVFIP) is the Selectivity filter part_3 element. A chloride-binding site is contributed by phenylalanine 514. An intramembrane region (helical) is located at residues 545-559 (GKYALMGAAAQLGGI). Residues 560-562 (VRM) constitute an intramembrane region (note=Loop between two helices). Positions 563-574 (TLSLTVIMMEAT) form an intramembrane region, helical. The segment at residues 575–578 (SNVT) is an intramembrane region (note=Loop between two helices). The chain crosses the membrane as a helical span at residues 579–597 (YGFPIMLVLMTAKIVGDVF). Topologically, residues 598-805 (IEGLYDMHIQ…GLEELSLAQT (208 aa)) are cytoplasmic. Residue tyrosine 602 coordinates chloride. 2 consecutive CBS domains span residues 631-695 (MSTP…VFVE) and 741-799 (MNPS…GLEE). Residues 658-660 (HNG) and 783-786 (TRKD) each bind ATP. Serine 801 is subject to Phosphoserine.

The protein belongs to the chloride channel (TC 2.A.49) family. ClC-7/CLCN7 subfamily. Chloride channel 7 are heteromers of alpha (CLCN7) and beta (OSTM1) subunits. As to expression, brain and kidney.

Its subcellular location is the lysosome membrane. The enzyme catalyses 2 chloride(in) + H(+)(out) = 2 chloride(out) + H(+)(in). Functionally, slowly voltage-gated channel mediating the exchange of chloride ions against protons. Functions as antiporter and contributes to the acidification of the lysosome lumen and may be involved in maintaining lysosomal pH. The CLC channel family contains both chloride channels and proton-coupled anion transporters that exchange chloride or another anion for protons. The presence of conserved gating glutamate residues is typical for family members that function as antiporters. The protein is H(+)/Cl(-) exchange transporter 7 of Homo sapiens (Human).